A 400-amino-acid chain; its full sequence is Lysophospholipid transporter LplT (400 aa).

Transmembrane regions (helical) follow at residues 19–39 (VIVAQFLSAFGDNALLFATLA), 53–73 (VLQMVFVGAYILFAPFVGQIA), 91–111 (AGAAGICLGVNPFVGYTLVGI), 139–159 (LMEASTIAAILLGSVAGGVLA), 164–184 (IAALVACALAYAGAVAANLFI), 195–213 (SWRLSAMTRSFFSACVVLW), 227–247 (LFWGAGVTLRFLLVLWVPVAL), 257–277 (YLNAMVAVGIVVGAGAAAKLV), 281–301 (TVSRCMPAGILIGVVVAIFSL), 304–324 (ALLPAYALLLLIGMLGGFFVV), 352–372 (NSAMLLMLGLYSLAVLVGVPA), and 373–393 (VAIGIGFGVLFALAIAALWIW).

Belongs to the major facilitator superfamily. LplT (TC 2.A.1.42) family.

The protein resides in the cell inner membrane. Its function is as follows. Catalyzes the facilitated diffusion of 2-acyl-glycero-3-phosphoethanolamine (2-acyl-GPE) into the cell. This chain is Lysophospholipid transporter LplT, found in Salmonella heidelberg (strain SL476).